The sequence spans 1035 residues: Translation initiation factor IF-2 (1035 aa).

The segment covering K56–K66 has biased composition (basic and acidic residues). Disordered stretches follow at residues K56–A80 and A114–N402. Residues A68–S78 show a composition bias toward polar residues. Composition is skewed to basic and acidic residues over residues A114–T137 and L146–D200. Positions D219 to E228 are enriched in polar residues. Positions S229–D238 are enriched in basic and acidic residues. The segment covering N239–E253 has biased composition (polar residues). Over residues L259–R315 the composition is skewed to basic and acidic residues. Over residues P316 to K325 the composition is skewed to polar residues. 2 stretches are compositionally biased toward basic and acidic residues: residues A327–K347 and Q354–P385. A tr-type G domain is found at P537 to K706. The segment at G546–T553 is G1. GTP is bound at residue G546–T553. The interval G571–H575 is G2. A G3 region spans residues D592–G595. Residues D592–H596 and N646–D649 each bind GTP. The segment at N646–D649 is G4. The segment at S682 to K684 is G5.

The protein belongs to the TRAFAC class translation factor GTPase superfamily. Classic translation factor GTPase family. IF-2 subfamily.

Its subcellular location is the cytoplasm. Its function is as follows. One of the essential components for the initiation of protein synthesis. Protects formylmethionyl-tRNA from spontaneous hydrolysis and promotes its binding to the 30S ribosomal subunits. Also involved in the hydrolysis of GTP during the formation of the 70S ribosomal complex. This is Translation initiation factor IF-2 from Acetivibrio thermocellus (strain ATCC 27405 / DSM 1237 / JCM 9322 / NBRC 103400 / NCIMB 10682 / NRRL B-4536 / VPI 7372) (Clostridium thermocellum).